Here is a 48-residue protein sequence, read N- to C-terminus: M-oxotoxin-Ot1b (48 aa).

It is found in the secreted. The protein localises to the target cell membrane. Its function is as follows. Disrupts cell membranes, particularly those rich in phosphocholine, through formation of pores. Has antimicrobial activity, hemolytic activity and insecticidal activity. This is M-oxotoxin-Ot1b from Oxyopes takobius (Lynx spider).